Here is a 267-residue protein sequence, read N- to C-terminus: 4-hydroxy-tetrahydrodipicolinate reductase (267 aa).

NAD(+)-binding positions include 12-17 (GARGRM), Asp38, 100-102 (GTT), and 126-129 (APNF). The Proton donor/acceptor role is filled by His156. Position 157 (His157) interacts with (S)-2,3,4,5-tetrahydrodipicolinate. Lys160 functions as the Proton donor in the catalytic mechanism. 166–167 (GT) provides a ligand contact to (S)-2,3,4,5-tetrahydrodipicolinate.

This sequence belongs to the DapB family.

The protein localises to the cytoplasm. The catalysed reaction is (S)-2,3,4,5-tetrahydrodipicolinate + NAD(+) + H2O = (2S,4S)-4-hydroxy-2,3,4,5-tetrahydrodipicolinate + NADH + H(+). It catalyses the reaction (S)-2,3,4,5-tetrahydrodipicolinate + NADP(+) + H2O = (2S,4S)-4-hydroxy-2,3,4,5-tetrahydrodipicolinate + NADPH + H(+). It participates in amino-acid biosynthesis; L-lysine biosynthesis via DAP pathway; (S)-tetrahydrodipicolinate from L-aspartate: step 4/4. In terms of biological role, catalyzes the conversion of 4-hydroxy-tetrahydrodipicolinate (HTPA) to tetrahydrodipicolinate. The chain is 4-hydroxy-tetrahydrodipicolinate reductase from Bacillus pumilus (strain SAFR-032).